A 212-amino-acid polypeptide reads, in one-letter code: MLTPYGRSTILKTTIFASAIAVTGLFFPPVSRAVLILSAAAILGFAFWFFRDPERTPAETGRVILAPADGRVILVEERDHPFTGSRSTLISIFMSPLNVHVNRIPQSGRIRHLQYHPGSFKMAFDHKSMEENERMDIGIESDSLKIFFSQVSGFIARRIVCPLRMDEAVEAGKRFGMIKFGSRVDIIIPQGSTPAVTIGGKTRAGETVIARW.

The Schiff-base intermediate with substrate; via pyruvic acid role is filled by S182. Position 182 is a pyruvic acid (Ser); by autocatalysis (S182).

Belongs to the phosphatidylserine decarboxylase family. PSD-A subfamily. Heterodimer of a large membrane-associated beta subunit and a small pyruvoyl-containing alpha subunit. The cofactor is pyruvate. In terms of processing, is synthesized initially as an inactive proenzyme. Formation of the active enzyme involves a self-maturation process in which the active site pyruvoyl group is generated from an internal serine residue via an autocatalytic post-translational modification. Two non-identical subunits are generated from the proenzyme in this reaction, and the pyruvate is formed at the N-terminus of the alpha chain, which is derived from the carboxyl end of the proenzyme. The post-translation cleavage follows an unusual pathway, termed non-hydrolytic serinolysis, in which the side chain hydroxyl group of the serine supplies its oxygen atom to form the C-terminus of the beta chain, while the remainder of the serine residue undergoes an oxidative deamination to produce ammonia and the pyruvoyl prosthetic group on the alpha chain.

It is found in the cell membrane. It carries out the reaction a 1,2-diacyl-sn-glycero-3-phospho-L-serine + H(+) = a 1,2-diacyl-sn-glycero-3-phosphoethanolamine + CO2. It participates in phospholipid metabolism; phosphatidylethanolamine biosynthesis; phosphatidylethanolamine from CDP-diacylglycerol: step 2/2. Catalyzes the formation of phosphatidylethanolamine (PtdEtn) from phosphatidylserine (PtdSer). This is Phosphatidylserine decarboxylase proenzyme from Chlorobium luteolum (strain DSM 273 / BCRC 81028 / 2530) (Pelodictyon luteolum).